A 632-amino-acid chain; its full sequence is MAU2 chromatid cohesion factor homolog (632 aa).

TPR repeat units lie at residues 453-486 and 493-526; these read GGFY…ANAE and SCSL…ASKI.

It belongs to the SCC4/mau-2 family. Interacts with Nipped-B to form the cohesin loading complex.

Its subcellular location is the nucleus. The protein localises to the nucleoplasm. In terms of biological role, required for association of the cohesin complex with chromatin during interphase. Plays a role in sister chromatid cohesion and normal progression through prometaphase. In Drosophila yakuba (Fruit fly), this protein is MAU2 chromatid cohesion factor homolog.